Here is a 356-residue protein sequence, read N- to C-terminus: Histidinol-phosphate aminotransferase 1 (356 aa).

Lys213 is modified (N6-(pyridoxal phosphate)lysine).

It belongs to the class-II pyridoxal-phosphate-dependent aminotransferase family. Histidinol-phosphate aminotransferase subfamily. As to quaternary structure, homodimer. It depends on pyridoxal 5'-phosphate as a cofactor.

The catalysed reaction is L-histidinol phosphate + 2-oxoglutarate = 3-(imidazol-4-yl)-2-oxopropyl phosphate + L-glutamate. It participates in amino-acid biosynthesis; L-histidine biosynthesis; L-histidine from 5-phospho-alpha-D-ribose 1-diphosphate: step 7/9. The sequence is that of Histidinol-phosphate aminotransferase 1 (hisC1) from Bordetella parapertussis (strain 12822 / ATCC BAA-587 / NCTC 13253).